The primary structure comprises 517 residues: Crotonobetaine/carnitine--CoA ligase (517 aa).

The protein belongs to the ATP-dependent AMP-binding enzyme family.

The catalysed reaction is 4-(trimethylamino)butanoate + ATP + CoA = 4-(trimethylamino)butanoyl-CoA + AMP + diphosphate. It catalyses the reaction crotonobetaine + ATP + CoA = crotonobetainyl-CoA + AMP + diphosphate. The enzyme catalyses (R)-carnitine + ATP + CoA = (R)-carnitinyl-CoA + AMP + diphosphate. It functions in the pathway amine and polyamine metabolism; carnitine metabolism. In terms of biological role, catalyzes the transfer of CoA to carnitine, generating the initial carnitinyl-CoA needed for the CaiB reaction cycle. Also has activity toward crotonobetaine and gamma-butyrobetaine. This is Crotonobetaine/carnitine--CoA ligase from Escherichia coli (strain SE11).